A 466-amino-acid chain; its full sequence is Ribulose bisphosphate carboxylase large chain (466 aa).

At Lys-5 the chain carries N6,N6,N6-trimethyllysine. 2 residues coordinate substrate: Asn-114 and Thr-164. Residue Lys-166 is the Proton acceptor of the active site. Lys-168 contributes to the substrate binding site. Lys-192, Asp-194, and Glu-195 together coordinate Mg(2+). Lys-192 is subject to N6-carboxylysine. His-285 (proton acceptor) is an active-site residue. Arg-286, His-318, and Ser-370 together coordinate substrate.

This sequence belongs to the RuBisCO large chain family. Type I subfamily. As to quaternary structure, heterohexadecamer of 8 large chains and 8 small chains; disulfide-linked. The disulfide link is formed within the large subunit homodimers. It depends on Mg(2+) as a cofactor. Post-translationally, the disulfide bond which can form in the large chain dimeric partners within the hexadecamer appears to be associated with oxidative stress and protein turnover.

The protein localises to the plastid. It localises to the chloroplast. The enzyme catalyses 2 (2R)-3-phosphoglycerate + 2 H(+) = D-ribulose 1,5-bisphosphate + CO2 + H2O. The catalysed reaction is D-ribulose 1,5-bisphosphate + O2 = 2-phosphoglycolate + (2R)-3-phosphoglycerate + 2 H(+). Functionally, ruBisCO catalyzes two reactions: the carboxylation of D-ribulose 1,5-bisphosphate, the primary event in carbon dioxide fixation, as well as the oxidative fragmentation of the pentose substrate in the photorespiration process. Both reactions occur simultaneously and in competition at the same active site. In Drosera filiformis (Thread-leaved sundew), this protein is Ribulose bisphosphate carboxylase large chain.